The chain runs to 123 residues: Large ribosomal subunit protein uL18 (123 aa).

This sequence belongs to the universal ribosomal protein uL18 family. As to quaternary structure, part of the 50S ribosomal subunit; part of the 5S rRNA/L5/L18/L25 subcomplex. Contacts the 5S and 23S rRNAs.

In terms of biological role, this is one of the proteins that bind and probably mediate the attachment of the 5S RNA into the large ribosomal subunit, where it forms part of the central protuberance. This chain is Large ribosomal subunit protein uL18, found in Symbiobacterium thermophilum (strain DSM 24528 / JCM 14929 / IAM 14863 / T).